The sequence spans 1264 residues: Protein fantom (1264 aa).

Coiled-coil stretches lie at residues 64 to 143 (LKQH…LQVQ), 196 to 268 (YSNS…NVET), 299 to 454 (LRIS…ESDI), and 488 to 555 (NKDL…VHLL). 2 C2 domains span residues 577–714 (KQYK…FCTT) and 773–897 (AATT…SGIF). Disordered stretches follow at residues 979–1018 (DTIS…YPSK) and 1047–1093 (QLAS…NTKQ). Over residues 1056-1080 (SEDETEITEELEPEDEDRSASDSDD) the composition is skewed to acidic residues.

This sequence belongs to the RPGRIP1 family. In terms of assembly, interacts with NPHP4 and NPHP1; NPHP1, NPHP4 and RPGRIP1L are proposed to form a functional NPHP1-4-8 module localized to cell-cell contacts and the ciliary transition zone; NPHP4 mediates the interaction between NPHP1 and RPGRIP1L. Interacts with IQCB1; the interaction likely requires additional interactors. Interacts with TBXA2R (via C-terminus), RPGR, NEK4. Interacts with NPHP4, INVS and DVL2; proposed to form a complex involved in DVL2 stabilization. Interacts with PSMD2. Ubiquitously expressed. Not found in heart and skin.

It localises to the cytoplasm. It is found in the cytoskeleton. The protein localises to the cilium basal body. Its subcellular location is the cilium axoneme. The protein resides in the microtubule organizing center. It localises to the centrosome. It is found in the cell junction. The protein localises to the tight junction. Functionally, negatively regulates signaling through the G-protein coupled thromboxane A2 receptor (TBXA2R). May be involved in mechanisms like programmed cell death, craniofacial development, patterning of the limbs, and formation of the left-right axis. Involved in the organization of apical junctions; the function is proposed to implicate a NPHP1-4-8 module. Does not seem to be strictly required for ciliogenesis. Involved in establishment of planar cell polarity such as in cochlear sensory epithelium and is proposed to implicate stabilization of disheveled proteins. Involved in regulation of proteasomal activity at the primary cilium probably implicating association with PSDM2. The polypeptide is Protein fantom (Rpgrip1l) (Mus musculus (Mouse)).